The chain runs to 247 residues: Carboxy-S-adenosyl-L-methionine synthase (247 aa).

Residues Tyr-39, 64 to 66 (GCS), 89 to 90 (DN), 117 to 118 (DI), Asn-132, and Arg-199 contribute to the S-adenosyl-L-methionine site.

This sequence belongs to the class I-like SAM-binding methyltransferase superfamily. Cx-SAM synthase family. As to quaternary structure, homodimer.

The catalysed reaction is prephenate + S-adenosyl-L-methionine = carboxy-S-adenosyl-L-methionine + 3-phenylpyruvate + H2O. Its function is as follows. Catalyzes the conversion of S-adenosyl-L-methionine (SAM) to carboxy-S-adenosyl-L-methionine (Cx-SAM). This is Carboxy-S-adenosyl-L-methionine synthase from Shigella sonnei (strain Ss046).